The primary structure comprises 123 residues: Small ribosomal subunit protein uS12 (123 aa).

Aspartate 89 bears the 3-methylthioaspartic acid mark.

The protein belongs to the universal ribosomal protein uS12 family. Part of the 30S ribosomal subunit. Contacts proteins S8 and S17. May interact with IF1 in the 30S initiation complex.

In terms of biological role, with S4 and S5 plays an important role in translational accuracy. Functionally, interacts with and stabilizes bases of the 16S rRNA that are involved in tRNA selection in the A site and with the mRNA backbone. Located at the interface of the 30S and 50S subunits, it traverses the body of the 30S subunit contacting proteins on the other side and probably holding the rRNA structure together. The combined cluster of proteins S8, S12 and S17 appears to hold together the shoulder and platform of the 30S subunit. This Granulibacter bethesdensis (strain ATCC BAA-1260 / CGDNIH1) protein is Small ribosomal subunit protein uS12.